The chain runs to 393 residues: NAD(P)H-quinone oxidoreductase subunit H, chloroplastic (393 aa).

It belongs to the complex I 49 kDa subunit family. In terms of assembly, NDH is composed of at least 16 different subunits, 5 of which are encoded in the nucleus.

The protein resides in the plastid. It is found in the chloroplast thylakoid membrane. It carries out the reaction a plastoquinone + NADH + (n+1) H(+)(in) = a plastoquinol + NAD(+) + n H(+)(out). The catalysed reaction is a plastoquinone + NADPH + (n+1) H(+)(in) = a plastoquinol + NADP(+) + n H(+)(out). Its function is as follows. NDH shuttles electrons from NAD(P)H:plastoquinone, via FMN and iron-sulfur (Fe-S) centers, to quinones in the photosynthetic chain and possibly in a chloroplast respiratory chain. The immediate electron acceptor for the enzyme in this species is believed to be plastoquinone. Couples the redox reaction to proton translocation, and thus conserves the redox energy in a proton gradient. In Jasminum nudiflorum (Winter jasmine), this protein is NAD(P)H-quinone oxidoreductase subunit H, chloroplastic.